The sequence spans 179 residues: Large ribosomal subunit protein uL6 (179 aa).

This sequence belongs to the universal ribosomal protein uL6 family. Part of the 50S ribosomal subunit.

This protein binds to the 23S rRNA, and is important in its secondary structure. It is located near the subunit interface in the base of the L7/L12 stalk, and near the tRNA binding site of the peptidyltransferase center. In Prochlorococcus marinus (strain MIT 9312), this protein is Large ribosomal subunit protein uL6.